A 324-amino-acid chain; its full sequence is Aldo-keto reductase family 1 member C15 (324 aa).

NADP(+) is bound by residues 24 to 26 and Asp51; that span reads TFA. The active-site Proton donor is the Tyr56. Residue His118 coordinates substrate. NADP(+) contacts are provided by residues 167-168, Gln191, 217-225, and 269-281; these read SN, YSALGSHRD, and LAKS…IKEN.

It belongs to the aldo/keto reductase family. In terms of assembly, monomer. As to expression, expressed in lung, specifically in bronchiolar club cells, type II alveolar cells and epithelial cells of the duct of the bronchial gland (at protein level). Expressed in gastric parietal cells and in epithelial cells of the large intestine and colon (at protein level). Expressed in brown adipocytes (at protein level). Expressed in vascular endothelial cells (at protein level).

The protein localises to the cytoplasm. It catalyses the reaction (2E,6E)-farnesol + NADP(+) = (2E,6E)-farnesal + NADPH + H(+). With respect to regulation, the dehydrogenase activity is inhibited by 3',3'',5',5''-tetraiodophenolphthalein, phenolphthalein, genistein, quercetin, zearalenone and diethylstilbestrol. In terms of biological role, catalyzes the NADPH-dependent reduction of a variety of substrates including aromatic and aliphatic aldehydes, quinones, ketones, dicarbonyl compounds and 17-ketosteroids. Catalyzes the NADP(+)-dependent oxidation of aromatic, alicyclic and aliphatic alcohols, and 17beta-hydroxysteroids. To a lesser extent, can also catalyze the reduction of some aldoses and ketoses and the oxidation of some sugar alcohols. In the stomach, lung and colon tissues, mediates the reduction of farnesal and geranylgeranial into farnesol and geranylgeraniol respectively. By reducing 4-hydroxy-2-nonenal (HNE), produced during lipid peroxidation, into 1,4-dihydro-2-nonene (DHN), protects vascular endothelial cells from damage elicited by oxidized lipoproteins. This Rattus norvegicus (Rat) protein is Aldo-keto reductase family 1 member C15.